Consider the following 382-residue polypeptide: 4-hydroxybutyrate dehydrogenase (382 aa).

NAD(+) is bound by residues D37, N67, 94 to 98 (GSSID), 138 to 142 (TTSGT), and K159. Residues D193, H197, H261, and H280 each contribute to the Fe cation site. H280 is a binding site for NAD(+).

This sequence belongs to the iron-containing alcohol dehydrogenase family. It depends on Fe cation as a cofactor.

The catalysed reaction is 4-hydroxybutanoate + NAD(+) = succinate semialdehyde + NADH + H(+). Its activity is regulated as follows. Shows competitive inhibition of GHBDH activity by the product succinic semialdehyde, and non-competitive inhibitions by the three other substrate-product combinations. The conversion of GHB to SSA is activated by two different saturating purified nudix hydrolases, B.methanolicus activator ACT and E.coli NudF. The nudix hydrolases do not activate the reverse reaction. In terms of biological role, involved in the degradation of 4-hydroxybutyrate. Catalyzes the interconversion of gamma-hydroxybutyrate (GHB) and succinic semialdehyde (SSA). The protein is 4-hydroxybutyrate dehydrogenase of Cupriavidus necator (Alcaligenes eutrophus).